The following is a 265-amino-acid chain: Transcriptional activator AggR (265 aa).

Positions 164 to 261 constitute an HTH araC/xylS-type domain; sequence DKVRNTIEKD…GITPKQFLTY (98 aa). 2 consecutive DNA-binding regions (H-T-H motif) follow at residues 181 to 202 and 228 to 251; these read AIIA…ESEY and ISQI…VKHF.

Homodimer.

Functionally, transcriptional activator of aggregative adherence fimbria I expression in enteroaggregative E.coli. This chain is Transcriptional activator AggR (aggR), found in Escherichia coli.